We begin with the raw amino-acid sequence, 496 residues long: Lysine--tRNA ligase (496 aa).

Mg(2+) is bound by residues E409 and E416.

It belongs to the class-II aminoacyl-tRNA synthetase family. As to quaternary structure, homodimer. Mg(2+) serves as cofactor.

It is found in the cytoplasm. It carries out the reaction tRNA(Lys) + L-lysine + ATP = L-lysyl-tRNA(Lys) + AMP + diphosphate. The protein is Lysine--tRNA ligase of Streptococcus pneumoniae (strain CGSP14).